A 470-amino-acid chain; its full sequence is Putative multidrug resistance protein MdtD (470 aa).

The Periplasmic segment spans residues 1-11 (MTELPDNTRWQ). Residues 12-32 (LWIVAFGFFMQSLDTTIVNTA) traverse the membrane as a helical segment. The Cytoplasmic segment spans residues 33–48 (LPSMAKSLGESPLHMH). A helical transmembrane segment spans residues 49 to 69 (MVVVSYVLTVAVMLPASGWLA). The Periplasmic segment spans residues 70–76 (DKIGVRN). Residues 77-97 (IFFAAIVLFTLGSLFCALSGT) form a helical membrane-spanning segment. Topologically, residues 98–101 (LNQL) are cytoplasmic. The chain crosses the membrane as a helical span at residues 102–124 (VLARVLQGVGGAMMVPVGRLTVM). Residues 125-137 (KIVPRAQYMAAMT) lie on the Periplasmic side of the membrane. A helical membrane pass occupies residues 138 to 158 (FVTLPGQIGPLLGPALGGVLV). Topologically, residues 159–164 (EYASWH) are cytoplasmic. Residues 165 to 185 (WIFLINIPVGIVGAMATFMLM) traverse the membrane as a helical segment. At 186 to 196 (PNYTIETRRFD) the chain is on the periplasmic side. A helical membrane pass occupies residues 197-217 (LPGFLLLAIGMAVLTLALDGS). The Cytoplasmic segment spans residues 218–224 (KSMGISP). Residues 225 to 245 (WTLAGLAAGGAAAILLYLFHA) form a helical membrane-spanning segment. The Periplasmic segment spans residues 246–262 (KKNSGALFSLRLFRTPT). A helical membrane pass occupies residues 263–283 (FSLGLLGSFAGRIGSGMLPFM). Residues 284 to 285 (TP) are Cytoplasmic-facing. A helical membrane pass occupies residues 286–306 (VFLQIGLGFSPFHAGLMMIPM). Topologically, residues 307–341 (VLGSMGMKRIVVQIVNRFGYRRVLVATTLGLALVS) are periplasmic. Residues 342-362 (LLFMSVALLGWYYLLPLVLLL) form a helical membrane-spanning segment. Over 363–395 (QGMVNSARFSSMNTLTLKDLPDTLASSGNSLLS) the chain is Cytoplasmic. The chain crosses the membrane as a helical span at residues 396-416 (MIMQLSMSIGVTIAGMLLGMF). At 417-430 (GQQHIGIDSSATHH) the chain is on the periplasmic side. Residues 431-451 (VFMYTWLCMAVIIALPAIIFA) traverse the membrane as a helical segment. The Cytoplasmic portion of the chain corresponds to 452-470 (RVPNDTQQNMVISRRKRSL).

Belongs to the major facilitator superfamily. TCR/Tet family.

The protein resides in the cell inner membrane. This Salmonella agona (strain SL483) protein is Putative multidrug resistance protein MdtD.